Consider the following 259-residue polypeptide: MIQIEALPAFSDNYIWLLQDTAKRRCAVVDPGDAGPVERWLAANPEWVLSDILVTHHHNDHVGGVERLRQLTGARVCGPANERIPGRDLALDEGDRVDVLGVTFQVMAVPGHTLGHIAFFSDQPATPILFSGDTLFAAGCGRMFEGTPEQMQPALARLAALPEQTQVYCAHEYTLSNLRFAKAVEPTNPHVQQRFEDVTRLRAENRISLPSTIGLERLTNPFLRTAETLVKQKADEWKGHSNNSHVAVFAALRSWKDTF.

Histidine 56, histidine 58, aspartate 60, histidine 61, histidine 112, aspartate 133, and histidine 171 together coordinate Zn(2+).

Belongs to the metallo-beta-lactamase superfamily. Glyoxalase II family. As to quaternary structure, monomer. The cofactor is Zn(2+).

It catalyses the reaction an S-(2-hydroxyacyl)glutathione + H2O = a 2-hydroxy carboxylate + glutathione + H(+). It participates in secondary metabolite metabolism; methylglyoxal degradation; (R)-lactate from methylglyoxal: step 2/2. Its function is as follows. Thiolesterase that catalyzes the hydrolysis of S-D-lactoyl-glutathione to form glutathione and D-lactic acid. The protein is Hydroxyacylglutathione hydrolase of Pseudomonas putida (strain ATCC 47054 / DSM 6125 / CFBP 8728 / NCIMB 11950 / KT2440).